Consider the following 263-residue polypeptide: Ribosomal RNA small subunit methyltransferase A (263 aa).

6 residues coordinate S-adenosyl-L-methionine: asparagine 13, threonine 15, glycine 40, glutamate 61, aspartate 85, and asparagine 105.

This sequence belongs to the class I-like SAM-binding methyltransferase superfamily. rRNA adenine N(6)-methyltransferase family. RsmA subfamily.

It is found in the cytoplasm. It catalyses the reaction adenosine(1518)/adenosine(1519) in 16S rRNA + 4 S-adenosyl-L-methionine = N(6)-dimethyladenosine(1518)/N(6)-dimethyladenosine(1519) in 16S rRNA + 4 S-adenosyl-L-homocysteine + 4 H(+). In terms of biological role, specifically dimethylates two adjacent adenosines (A1518 and A1519) in the loop of a conserved hairpin near the 3'-end of 16S rRNA in the 30S particle. May play a critical role in biogenesis of 30S subunits. The protein is Ribosomal RNA small subunit methyltransferase A of Mycoplasma pneumoniae (strain ATCC 29342 / M129 / Subtype 1) (Mycoplasmoides pneumoniae).